The following is a 353-amino-acid chain: uncharacterized protein (353 aa).

A signal peptide spans 1 to 24; sequence MRVVERAVIACYLGITIFSGIAFG.

It belongs to the chlamydial CPn_1058/CT_355/TC_0634 family.

This is an uncharacterized protein from Chlamydia trachomatis serovar D (strain ATCC VR-885 / DSM 19411 / UW-3/Cx).